The sequence spans 531 residues: Peptide chain release factor 3 (531 aa).

In terms of domain architecture, tr-type G spans 13-282; sequence SKRRTFAIIS…GLTQWAPSPM (270 aa). Residues 22–29, 90–94, and 144–147 each bind GTP; these read SHPDAGKT, DTPGH, and NKLD.

The protein belongs to the TRAFAC class translation factor GTPase superfamily. Classic translation factor GTPase family. PrfC subfamily.

It is found in the cytoplasm. Functionally, increases the formation of ribosomal termination complexes and stimulates activities of RF-1 and RF-2. It binds guanine nucleotides and has strong preference for UGA stop codons. It may interact directly with the ribosome. The stimulation of RF-1 and RF-2 is significantly reduced by GTP and GDP, but not by GMP. The sequence is that of Peptide chain release factor 3 from Vibrio cholerae serotype O1 (strain ATCC 39315 / El Tor Inaba N16961).